The chain runs to 403 residues: Phosphoglycerate kinase (403 aa).

Substrate-binding positions include 21 to 23 (DFN), R36, 59 to 62 (HLGR), R119, and R154. ATP-binding positions include K207, G299, E330, and 357–360 (GGDA).

Belongs to the phosphoglycerate kinase family. As to quaternary structure, monomer.

The protein resides in the cytoplasm. It carries out the reaction (2R)-3-phosphoglycerate + ATP = (2R)-3-phospho-glyceroyl phosphate + ADP. It participates in carbohydrate degradation; glycolysis; pyruvate from D-glyceraldehyde 3-phosphate: step 2/5. The protein is Phosphoglycerate kinase of Chlamydia trachomatis serovar L2 (strain ATCC VR-902B / DSM 19102 / 434/Bu).